A 110-amino-acid chain; its full sequence is Large ribosomal subunit protein uL22 (110 aa).

Belongs to the universal ribosomal protein uL22 family. As to quaternary structure, part of the 50S ribosomal subunit.

This protein binds specifically to 23S rRNA; its binding is stimulated by other ribosomal proteins, e.g. L4, L17, and L20. It is important during the early stages of 50S assembly. It makes multiple contacts with different domains of the 23S rRNA in the assembled 50S subunit and ribosome. Functionally, the globular domain of the protein is located near the polypeptide exit tunnel on the outside of the subunit, while an extended beta-hairpin is found that lines the wall of the exit tunnel in the center of the 70S ribosome. The protein is Large ribosomal subunit protein uL22 of Photorhabdus laumondii subsp. laumondii (strain DSM 15139 / CIP 105565 / TT01) (Photorhabdus luminescens subsp. laumondii).